Here is a 79-residue protein sequence, read N- to C-terminus: Small ribosomal subunit protein bS18 (79 aa).

In terms of assembly, part of the 30S ribosomal subunit. Forms a tight heterodimer with protein bS6. In terms of processing, both N-terminus methionine truncation and retention have been observed for this protein. Post-translationally, may be methylated up to 6 times, on undetermined residues.

Binds as a heterodimer with protein bS6 to the central domain of the 16S rRNA, where it helps stabilize the platform of the 30S subunit. This Rhodopseudomonas palustris (strain ATCC BAA-98 / CGA009) protein is Small ribosomal subunit protein bS18.